The primary structure comprises 106 residues: Iron-sulfur cluster assembly protein CyaY (106 aa).

This sequence belongs to the frataxin family.

Functionally, involved in iron-sulfur (Fe-S) cluster assembly. May act as a regulator of Fe-S biogenesis. The polypeptide is Iron-sulfur cluster assembly protein CyaY (Serratia proteamaculans (strain 568)).